The sequence spans 145 residues: UPF0310 protein Mvan_0064 (145 aa).

This sequence belongs to the UPF0310 family.

In Mycolicibacterium vanbaalenii (strain DSM 7251 / JCM 13017 / BCRC 16820 / KCTC 9966 / NRRL B-24157 / PYR-1) (Mycobacterium vanbaalenii), this protein is UPF0310 protein Mvan_0064.